A 243-amino-acid polypeptide reads, in one-letter code: Epoxyqueuosine reductase QueH (243 aa).

Over residues 1–16 (MHRTKLEQKQPHFDAQ) the composition is skewed to basic and acidic residues. Residues 1-30 (MHRTKLEQKQPHFDAQKRRKKECKNSNTPF) are disordered. Residues Cys49, Cys50, Cys128, and Cys131 each coordinate [4Fe-4S] cluster. Cys211 and Cys213 are oxidised to a cystine.

Belongs to the QueH family.

It carries out the reaction epoxyqueuosine(34) in tRNA + AH2 = queuosine(34) in tRNA + A + H2O. It functions in the pathway tRNA modification; tRNA-queuosine biosynthesis. Catalyzes the conversion of epoxyqueuosine (oQ) to queuosine (Q), which is a hypermodified base found in the wobble positions of tRNA(Asp), tRNA(Asn), tRNA(His) and tRNA(Tyr). The chain is Epoxyqueuosine reductase QueH from Histophilus somni (strain 129Pt) (Haemophilus somnus).